The primary structure comprises 288 residues: Pteridine reductase 1 (288 aa).

Position 17-40 (17-40 (RLGRSIAEGLHAEGYAVCLHYHRS)) interacts with NADP(+). Substrate is bound at residue serine 175. The active-site Proton acceptor is the tyrosine 194.

The protein belongs to the short-chain dehydrogenases/reductases (SDR) family. In terms of assembly, homotetramer.

The enzyme catalyses (6R)-L-erythro-5,6,7,8-tetrahydrobiopterin + 2 NADP(+) = L-erythro-biopterin + 2 NADPH + 2 H(+). It participates in cofactor biosynthesis; tetrahydrobiopterin biosynthesis; tetrahydrobiopterin from biopterin: step 1/1. Its function is as follows. Exhibits a NADPH-dependent biopterin reductase activity. Has good activity with folate and significant activity with dihydrofolate and dihydrobiopterin, but not with quinonoid dihydrobiopterin. Confers resistance to methotrexate (MTX). This Leishmania major protein is Pteridine reductase 1 (PTR1).